We begin with the raw amino-acid sequence, 778 residues long: Lon protease (778 aa).

One can recognise a Lon N-terminal domain in the interval 6–207 (LPLMALRDMV…TVISMLNSNI (202 aa)). 356-363 (GPPGVGKT) is a binding site for ATP. Residues 592–773 (EDQIGSTTGL…DQVLKHALVG (182 aa)) enclose the Lon proteolytic domain. Active-site residues include serine 679 and lysine 722.

It belongs to the peptidase S16 family. In terms of assembly, homohexamer. Organized in a ring with a central cavity.

Its subcellular location is the cytoplasm. The catalysed reaction is Hydrolysis of proteins in presence of ATP.. ATP-dependent serine protease that mediates the selective degradation of mutant and abnormal proteins as well as certain short-lived regulatory proteins. Required for cellular homeostasis and for survival from DNA damage and developmental changes induced by stress. Degrades polypeptides processively to yield small peptide fragments that are 5 to 10 amino acids long. Binds to DNA in a double-stranded, site-specific manner. This Rickettsia conorii (strain ATCC VR-613 / Malish 7) protein is Lon protease.